We begin with the raw amino-acid sequence, 246 residues long: Anamorsin homolog (246 aa).

An N-terminal SAM-like domain region spans residues 1–124; sequence MRVVVVDLDG…ARGTAFSLKS (124 aa). Positions 125–158 are linker; that stretch reads RAVRVVTADAGWGADADVDDELIDESALLTELDV. Positions 168, 177, 180, and 182 each coordinate [2Fe-2S] cluster. The interval 168 to 182 is fe-S binding site A; that stretch reads CDVGAGKKACKNCTC. [4Fe-4S] cluster is bound by residues Cys206, Cys209, Cys217, and Cys220. 2 short sequence motifs (cx2C motif) span residues 206–209 and 217–220; these read CGNC and CAGC. Residues 206–220 are fe-S binding site B; it reads CGNCALGDAFRCAGC.

It belongs to the anamorsin family. In terms of assembly, monomer. [2Fe-2S] cluster serves as cofactor. Requires [4Fe-4S] cluster as cofactor.

It localises to the cytoplasm. Its subcellular location is the mitochondrion intermembrane space. Its function is as follows. Component of the cytosolic iron-sulfur (Fe-S) protein assembly (CIA) machinery. Required for the maturation of extramitochondrial Fe-S proteins. Part of an electron transfer chain functioning in an early step of cytosolic Fe-S biogenesis, facilitating the de novo assembly of a [4Fe-4S] cluster on the cytosolic Fe-S scaffold complex. Electrons are transferred from NADPH via a FAD- and FMN-containing diflavin oxidoreductase. Together with the diflavin oxidoreductase, also required for the assembly of the diferric tyrosyl radical cofactor of ribonucleotide reductase (RNR), probably by providing electrons for reduction during radical cofactor maturation in the catalytic small subunit. The chain is Anamorsin homolog from Ostreococcus tauri.